The primary structure comprises 353 residues: N-acetyl-gamma-glutamyl-phosphate reductase (353 aa).

The active site involves Cys-155.

It belongs to the NAGSA dehydrogenase family. Type 1 subfamily.

The protein resides in the cytoplasm. The catalysed reaction is N-acetyl-L-glutamate 5-semialdehyde + phosphate + NADP(+) = N-acetyl-L-glutamyl 5-phosphate + NADPH + H(+). It functions in the pathway amino-acid biosynthesis; L-arginine biosynthesis; N(2)-acetyl-L-ornithine from L-glutamate: step 3/4. Its function is as follows. Catalyzes the NADPH-dependent reduction of N-acetyl-5-glutamyl phosphate to yield N-acetyl-L-glutamate 5-semialdehyde. This is N-acetyl-gamma-glutamyl-phosphate reductase from Microcystis aeruginosa (strain NIES-843 / IAM M-2473).